The chain runs to 397 residues: Succinyl-diaminopimelate desuccinylase (397 aa).

Position 73 (His73) interacts with Zn(2+). Asp75 is a catalytic residue. Residue Asp106 coordinates Zn(2+). Catalysis depends on Glu140, which acts as the Proton acceptor. Glu141, Glu169, and His366 together coordinate Zn(2+).

Belongs to the peptidase M20A family. DapE subfamily. Homodimer. Zn(2+) serves as cofactor. Co(2+) is required as a cofactor.

It carries out the reaction N-succinyl-(2S,6S)-2,6-diaminopimelate + H2O = (2S,6S)-2,6-diaminopimelate + succinate. Its pathway is amino-acid biosynthesis; L-lysine biosynthesis via DAP pathway; LL-2,6-diaminopimelate from (S)-tetrahydrodipicolinate (succinylase route): step 3/3. Functionally, catalyzes the hydrolysis of N-succinyl-L,L-diaminopimelic acid (SDAP), forming succinate and LL-2,6-diaminopimelate (DAP), an intermediate involved in the bacterial biosynthesis of lysine and meso-diaminopimelic acid, an essential component of bacterial cell walls. The sequence is that of Succinyl-diaminopimelate desuccinylase from Rhizobium meliloti (strain 1021) (Ensifer meliloti).